A 43-amino-acid polypeptide reads, in one-letter code: uncharacterized protein (43 aa).

This is an uncharacterized protein from Bacillus subtilis (strain 168).